Here is a 124-residue protein sequence, read N- to C-terminus: Small polypeptide ROTUNDIFOLIA LIKE 3 (124 aa).

Positions 1–23 (MEDERWKLSSSKGRSKSGRSCSS) are disordered. N-linked (GlcNAc...) asparagine glycans are attached at residues N35 and N38. A helical transmembrane segment spans residues 59 to 75 (AWSAAGAGGGGASSSSS). Residues 60–95 (WSAAGAGGGGASSSSSSQHQHQQQQQQSNNSQRLSK) are disordered. The span at 71-91 (SSSSSSQHQHQQQQQQSNNSQ) shows a compositional bias: low complexity. The N-linked (GlcNAc...) asparagine glycan is linked to N88. A required for DVL/RTFL small polypeptide activity region spans residues 92 to 124 (RLSKKCVEAVKEHRARFYIVRRCVSMLVCWRDY).

This sequence belongs to the DVL/RTFL small polypeptides family.

The protein resides in the cell membrane. In terms of biological role, small polypeptide acting as a regulatory molecule which coordinates cellular responses required for differentiation, growth and development, probably by restricting polar cell proliferation in lateral organs (e.g. leaves and petioles). The sequence is that of Small polypeptide ROTUNDIFOLIA LIKE 3 from Oryza sativa subsp. japonica (Rice).